The primary structure comprises 166 residues: MEDFFSIGQIINTHGVRGELKIYPLTDDINRFDDLDSVYVDNEIKKVISVKKQPNKLILKLEGIDTLDEAVKYKNKYIKVLREDAVELKEGQYFIKDIIGCNVFDENDKDLGEVYDVISTKNNDVYCIRKEGQQDILVPALKDIVLKIEIENKKIVIKAVEEWLES.

In terms of domain architecture, PRC barrel spans 90–163; that stretch reads EGQYFIKDII…KIVIKAVEEW (74 aa).

The protein belongs to the RimM family. As to quaternary structure, binds ribosomal protein uS19.

Its subcellular location is the cytoplasm. Functionally, an accessory protein needed during the final step in the assembly of 30S ribosomal subunit, possibly for assembly of the head region. Essential for efficient processing of 16S rRNA. May be needed both before and after RbfA during the maturation of 16S rRNA. It has affinity for free ribosomal 30S subunits but not for 70S ribosomes. This is Ribosome maturation factor RimM from Clostridium acetobutylicum (strain ATCC 824 / DSM 792 / JCM 1419 / IAM 19013 / LMG 5710 / NBRC 13948 / NRRL B-527 / VKM B-1787 / 2291 / W).